We begin with the raw amino-acid sequence, 315 residues long: Outer membrane protease IcsP (315 aa).

The signal sequence occupies residues 1-20; that stretch reads MKLKFFVLALCVPAIFTTHA. Residues aspartate 103, aspartate 105, aspartate 230, and histidine 232 contribute to the active site.

It belongs to the peptidase A26 family.

Its subcellular location is the cell outer membrane. In terms of biological role, protease responsible for the cleavage of IcsA between 'Arg-758' and 'Arg-759', removing the entire alpha domain from IscA localized on the bacterial surface. This proteolytic activity contributes to the maintenance of a tight polar cap of IcsA, which is important to Shigella actin-based motility. This is Outer membrane protease IcsP (icsP) from Shigella flexneri.